Consider the following 317-residue polypeptide: Glycine--tRNA ligase alpha subunit (317 aa).

Belongs to the class-II aminoacyl-tRNA synthetase family. As to quaternary structure, tetramer of two alpha and two beta subunits.

The protein localises to the cytoplasm. It catalyses the reaction tRNA(Gly) + glycine + ATP = glycyl-tRNA(Gly) + AMP + diphosphate. This Pseudomonas fluorescens (strain ATCC BAA-477 / NRRL B-23932 / Pf-5) protein is Glycine--tRNA ligase alpha subunit.